We begin with the raw amino-acid sequence, 119 residues long: Ribonuclease P protein component (119 aa).

It belongs to the RnpA family. As to quaternary structure, consists of a catalytic RNA component (M1 or rnpB) and a protein subunit.

It catalyses the reaction Endonucleolytic cleavage of RNA, removing 5'-extranucleotides from tRNA precursor.. Its function is as follows. RNaseP catalyzes the removal of the 5'-leader sequence from pre-tRNA to produce the mature 5'-terminus. It can also cleave other RNA substrates such as 4.5S RNA. The protein component plays an auxiliary but essential role in vivo by binding to the 5'-leader sequence and broadening the substrate specificity of the ribozyme. The polypeptide is Ribonuclease P protein component (Pectobacterium atrosepticum (strain SCRI 1043 / ATCC BAA-672) (Erwinia carotovora subsp. atroseptica)).